Here is a 149-residue protein sequence, read N- to C-terminus: Protein SprT-like (149 aa).

Residues 4 to 143 (TDYVKQVSLE…CGLCRGKLLL (140 aa)) enclose the SprT-like domain. His-64 is a binding site for Zn(2+). The active site involves Glu-65. Position 68 (His-68) interacts with Zn(2+).

The protein belongs to the SprT family. Zn(2+) is required as a cofactor.

Its subcellular location is the cytoplasm. This Streptococcus pneumoniae (strain Taiwan19F-14) protein is Protein SprT-like.